The primary structure comprises 262 residues: RNA-binding protein 7 (262 aa).

Position 2 is an N-acetylglycine (Gly2). One can recognise an RRM domain in the interval 10-87 (RTLFVGNLET…RPIKIQFRAG (78 aa)). 2 ZCCHC8 binding regions span residues 25–35 (LLFELFHQAGP) and 59–76 (HEVS…IKLF). A disordered region spans residues 95 to 121 (VSLSYPQHHVGNSSPTSTSPSRTVDNM). Ser133 and Ser134 each carry phosphoserine. Arg149 bears the Omega-N-methylarginine mark. Disordered stretches follow at residues 159–212 (SPHL…HYSR) and 242–262 (SHDY…SSRH). A compositionally biased stretch (polar residues) spans 165-194 (SGFSPSAQSHNHTFNQSSSSQWRQDTPSSQ). Position 201 is a phosphoserine (Ser201). Positions 242 to 253 (SHDYDNRRDSGR) are enriched in basic and acidic residues.

Component of the nuclear exosome targeting (NEXT) complex composed of MTREX, ZCCHC8, and RBM7 that directs a subset of non-coding short-lived RNAs for exosomal degradation. Interacts with ZCCHC8 and SF3B2/SAP145. Binds to MTREX through ZCCHC8. Interacts with YWHAE and YWHAZ; these interactions are stress-dependent and RBM7 phosphorylation dependent; release RNA from the NEXT complex and may affect RNA targeting to the nuclear RNA exosomome for degradation. Interacts with MEPCE and LARP7, the core subunits of 7SK snRNP; upon genotoxic stress this interaction is enhanced, triggering the release of inactive P-TEFb complex from the core and P-TEFb complex activation. In terms of processing, phosphorylated at Ser-133 by MAPK14/p38-alpha-activated MAPKAPK2/MK2; this phosphorylation is stress-dependent; this phosphorylation decreases its RNA-binding capacity therefore affecting RNA nuclear exosome-mediated degradation. This phosphorylation mediates YWHAE and YWHAZ interactions.

Its subcellular location is the nucleus. The protein localises to the nucleoplasm. In terms of biological role, RNA-binding subunit of the trimeric nuclear exosome targeting (NEXT) complex, a complex that functions as an RNA exosome cofactor that directs a subset of non-coding short-lived RNAs for exosomal degradation. NEXT is involved in surveillance and turnover of aberrant transcripts and non-coding RNAs. Binds preferentially polyuridine sequences and associates with newly synthesized RNAs, including pre-mRNAs and short-lived exosome substrates such as promoter upstream transcripts (PROMPTs), enhancer RNAs (eRNAs), and 3'-extended products from small nuclear RNAs (snRNAs). Participates in several biological processes including DNA damage response (DDR) and stress response. During stress response, activation of the p38MAPK-MK2 pathway decreases RBM7-RNA-binding and subsequently the RNA exosome degradation activities, thereby modulating the turnover of non-coding transcriptome. Participates in DNA damage response (DDR), through its interaction with MEPCE and LARP7, the core subunits of 7SK snRNP complex, that release the positive transcription elongation factor b (P-TEFb) complex from the 7SK snRNP. In turn, activation of P-TEFb complex induces the transcription of P-TEFb-dependent DDR genes to promote cell viability. This chain is RNA-binding protein 7, found in Bos taurus (Bovine).